Consider the following 162-residue polypeptide: MSVVFRTVEDPELKSICTTFTSSISAEFDSNTLVCDLVETDLFTEEGTSQIFTFKKNVLILPANVPEGIELRILEENVSLPLKEFEPIKVPAGAHCFLSWEKVPLRKRIKIISSSQPDDNDEESTWPGVFIKFGVENSSSAEFGEPLKSQIEIPDDQKLIVQ.

It is found in the cytoplasm. The protein resides in the nucleus. This is an uncharacterized protein from Schizosaccharomyces pombe (strain 972 / ATCC 24843) (Fission yeast).